The following is a 305-amino-acid chain: Ribonucleoside-diphosphate reductase small subunit (305 aa).

Glu-64, Glu-94, and His-97 together coordinate Fe cation. Tyr-101 is a catalytic residue. Residues 150-170 (VLVFLLIEGIFFISSFYSIAT) traverse the membrane as a helical segment. Positions 157, 191, and 194 each coordinate Fe cation.

The protein belongs to the ribonucleoside diphosphate reductase small chain family. As to quaternary structure, heterotetramer composed of a homodimer of the large subunit (R1) and a homodimer of the small subunit (R2). Larger multisubunit protein complex are also active, composed of (R1)n(R2)n. Fe cation is required as a cofactor.

It localises to the host membrane. It carries out the reaction a 2'-deoxyribonucleoside 5'-diphosphate + [thioredoxin]-disulfide + H2O = a ribonucleoside 5'-diphosphate + [thioredoxin]-dithiol. Functionally, ribonucleoside-diphosphate reductase holoenzyme provides the precursors necessary for viral DNA synthesis. Allows virus growth in non-dividing cells, as well as reactivation from latency in infected hosts. Catalyzes the biosynthesis of deoxyribonucleotides from the corresponding ribonucleotides. The protein is Ribonucleoside-diphosphate reductase small subunit of Equus caballus (Horse).